We begin with the raw amino-acid sequence, 807 residues long: Potassium transporter 9 (807 aa).

The Cytoplasmic portion of the chain corresponds to 1–59; that stretch reads MAERVEASSVPEGENTIEEREVGAMWELEQKLDQPMDEEANKLNNMYREKGLSMLMLLR. The chain crosses the membrane as a helical span at residues 60–80; the sequence is LSFQSLGIVYGDLGTSPLYVF. Topologically, residues 81–96 are extracellular; the sequence is YNTFPDGIDDSEDVIG. A helical membrane pass occupies residues 97-117; it reads ALSLIIYSLLLIPLIKYVFIV. The Cytoplasmic segment spans residues 118–185; it reads CKANDNGQGG…EGKEWRKRAL (68 aa). Residues 186–206 traverse the membrane as a helical segment; sequence LVVVLLGTCMMIGDGILTPAI. The Extracellular segment spans residues 207–225; sequence SVLSATGGIKVNNPKMSGD. Residues 226-246 form a helical membrane-spanning segment; that stretch reads IVVLVAIVILIGLFSMQHYGT. Topologically, residues 247–248 are cytoplasmic; the sequence is DK. A helical transmembrane segment spans residues 249 to 269; sequence VGWLFAPIVLIWFLFIGATGM. Topologically, residues 270 to 299 are extracellular; the sequence is YNICKYDTSVLKAFSPTYIYLYFKRRGRDG. The chain crosses the membrane as a helical span at residues 300–320; the sequence is WISLGGILLSITGTEALYADI. Residues 321–322 are Cytoplasmic-facing; the sequence is AY. A helical membrane pass occupies residues 323-343; that stretch reads FPLLAIQLAFTFFVFPCLLLA. Over 344–369 the chain is Extracellular; it reads YCGQAAYLVIHKEHYQDAFYASIPDS. The chain crosses the membrane as a helical span at residues 370–390; that stretch reads VYWPMFIVATGAAIVGSQATI. Residues 391-417 lie on the Cytoplasmic side of the membrane; that stretch reads SGTYSIVKQAVAHGCFPRVKIVHTSKK. A helical transmembrane segment spans residues 418-438; the sequence is FLGQIYCPDINWILMLGCIAV. At 439-454 the chain is on the extracellular side; it reads TASFKKQSQIGNAYGT. The helical transmembrane segment at 455 to 475 threads the bilayer; the sequence is AVVLVMLVTTLLMVLIMLLVW. At 476–481 the chain is on the cytoplasmic side; sequence HCHWIL. A helical membrane pass occupies residues 482 to 502; the sequence is VLIFTFLSFFVELSYFSAVIF. Topologically, residues 503–507 are extracellular; the sequence is KIDEG. Residues 508–528 traverse the membrane as a helical segment; sequence GWVPLIIAAISLLVMSVWHYA. The Cytoplasmic portion of the chain corresponds to 529–807; it reads TVKKYEFEMH…LLNVGQVFYV (279 aa).

The protein belongs to the HAK/KUP transporter (TC 2.A.72.3) family.

The protein localises to the cell membrane. In terms of biological role, putative potassium transporter. The sequence is that of Potassium transporter 9 (POT9) from Arabidopsis thaliana (Mouse-ear cress).